The primary structure comprises 662 residues: Hypoxia-inducible factor 3-alpha (662 aa).

The segment at 1–25 (MDWDQDRSSTELRKEKSRDAARSRR) is disordered. Residues 12–65 (LRKEKSRDAARSRRSQETEVLYQLAHTLPFARGVSAHLDKASIMRLTISYLRMH) form the bHLH domain. Residues 75-98 (QVRKEGEPLDACYLKALEGFVMVL) are nuclear localization signal. PAS domains follow at residues 80-150 (GEPL…PSLS) and 225-295 (PHPA…LSKG). A nuclear export signal region spans residues 228 to 272 (ASLEPPLGRGAFLSRHSLDMKFTYCDERIAEVAGYSPDDLIGCSA). The segment at 352–379 (EQTEQHTRRPPQLGTSSKKGIPGNSLDP) is disordered. An LRRLL motif is present at residues 410-413 (LRRL). Disordered stretches follow at residues 417–445 (ILDG…ADLP) and 459–480 (STAR…PDTP). Residues 421–433 (PPTAATPSTPQAA) are compositionally biased toward low complexity. The interval 448 to 581 (LAVGLENAHR…SEDKGLELLE (134 aa)) is ODD. The NTAD stretch occupies residues 450 to 501 (VGLENAHRLSTARKNKTMETDLDIAQDPDTPDLEMLAPYISMDDDFQLNSSE). K463 is covalently cross-linked (Glycyl lysine isopeptide (Lys-Gly) (interchain with G-Cter in ubiquitin)). The span at 469–480 (TDLDIAQDPDTP) shows a compositional bias: acidic residues. Residues 485–492 (LAPYISMD) carry the LAPYISMD motif. At P487 the chain carries 4-hydroxyproline. The segment at 500–595 (SEQLPKVHRR…KRSPRLEPGS (96 aa)) is disordered. Basic residues predominate over residues 505–521 (KVHRRPPRTARRPRARS). K565 is covalently cross-linked (Glycyl lysine isopeptide (Lys-Gly) (interchain with G-Cter in ubiquitin)). Residues 572 to 584 (SEDKGLELLETKP) show a composition bias toward basic and acidic residues.

In terms of assembly, interacts with ARNT, BAD, BCL2L2, EPAS1, HIF1A, MCL1 and VHL. Post-translationally, in normoxia, hydroxylated on Pro-487 in the oxygen-dependent degradation domain (ODD) by PHD. The hydroxylated proline promotes interaction with VHL, initiating rapid ubiquitination and subsequent proteasomal degradation. In terms of processing, ubiquitinated; ubiquitination occurs in a VHL- and oxygen-dependent pathway and subsequently targeted for proteasomal degradation. In terms of tissue distribution, expressed in the perivenous zone of the liver. Expressed in all tissues examined during normoxia. Expressed in brain and lung. Expressed in periportal and perivenous hepatocytes and in endothelial cells of the central vein (at protein level). Highest expression seen in the cerebral cortex, hippocampus, and lung. Low expression in myocardial tissue and liver.

It is found in the nucleus. The protein resides in the cytoplasm. Its subcellular location is the nucleus speckle. It localises to the mitochondrion. Its function is as follows. Acts as a transcriptional regulator in adaptive response to low oxygen tension. Attenuates the ability of transcription factor HIF1A, EPAS1 and the HIF1A-ARNT complex to bind to hypoxia-responsive elements (HRE) located within the enhancer/promoter of hypoxia-inducible target genes and hence inhibits HRE-driven transcriptional activation. Functions as an inhibitor of angiogenesis in hypoxic cells of the cornea. Plays a role in the development of the cardiorespiratory system. May also be involved in apoptosis. May act as a tumor suppressor. The chain is Hypoxia-inducible factor 3-alpha from Rattus norvegicus (Rat).